A 109-amino-acid chain; its full sequence is Transcription initiation factor IIA subunit 2 (109 aa).

Belongs to the TFIIA subunit 2 family. As to quaternary structure, TFIIA is a heterodimer composed of the large toa1 and the small toa2 subunits.

The protein localises to the nucleus. Its subcellular location is the cytoplasm. In terms of biological role, TFIIA is a component of the transcription machinery of RNA polymerase II and plays an important role in transcriptional activation. TFIIA in a complex with tbp mediates transcriptional activity. The sequence is that of Transcription initiation factor IIA subunit 2 (toa2) from Schizosaccharomyces pombe (strain 972 / ATCC 24843) (Fission yeast).